The chain runs to 215 residues: MVKSRNTTTAHVHDVPRIMGGIKKLKLTKETAMAAGRKLKTLLAKVDAVEKVCVICMEPTYTKKTLAECDIEGGALRVTTMPCPTHYICDNCIRQEMEDKCPICRKDWPERRIIYGNEAKLYKYWLIDNDDIMILENNNDIDELTPEEEDHLLSDDESDNYVPRYTLDSLVEEVLSERSQMSNDRLMNDMIDNIAVNNAIDDDCIIIDDYIDLTI.

The segment at 53 to 105 (CVICMEPTYTKKTLAECDIEGGALRVTTMPCPTHYICDNCIRQEMEDKCPICR) adopts an RING-type; degenerate zinc-finger fold.

The sequence is that of Putative zinc finger protein ORF121 from Magallana gigas (Pacific oyster).